We begin with the raw amino-acid sequence, 1201 residues long: HEAT repeat-containing protein 6 (1201 aa).

The disordered stretch occupies residues 1-25; that stretch reads MAGKVTFLGSNSSFSPDGKTQGFKS. An HEAT 1 repeat occupies 182–221; sequence PDLLGPSGVLVKYGDPKQPDIELRRSAVHCIANLCLSVPS. The tract at residues 321 to 390 is disordered; sequence AVKPEPAQDT…SQSSMLTSPS (70 aa). Residues 341 to 352 are compositionally biased toward basic residues; it reads QKKRKSRGKGKK. Positions 375–390 are enriched in polar residues; the sequence is SGWSHGSQSSMLTSPS. 3 HEAT repeats span residues 460-498, 523-560, and 566-603; these read GIGGPPPLTLLTIALKDPLPKVRAGSLQVLSALLEGSRQ, SIRELHRGLLLALIAESSCQTLTQVLKCLAHLVSNVPY, and GLLSPLWKQIRPYVRHRDVNVRVSSLTLFGALVSTQAP. Over residues 618-633 the composition is skewed to polar residues; sequence SSLGSGISTPQESPLS. Residues 618–653 are disordered; the sequence is SSLGSGISTPQESPLSWRQPARRDEEASSPAAAEGP.

This chain is HEAT repeat-containing protein 6 (heatr6), found in Danio rerio (Zebrafish).